A 154-amino-acid polypeptide reads, in one-letter code: 6,7-dimethyl-8-ribityllumazine synthase (154 aa).

Residues F22, 56-58 (AFE), and 80-82 (TVI) each bind 5-amino-6-(D-ribitylamino)uracil. 85–86 (ST) contacts (2S)-2-hydroxy-3-oxobutyl phosphate. The active-site Proton donor is the H88. Residue F113 participates in 5-amino-6-(D-ribitylamino)uracil binding. R127 provides a ligand contact to (2S)-2-hydroxy-3-oxobutyl phosphate.

This sequence belongs to the DMRL synthase family.

It catalyses the reaction (2S)-2-hydroxy-3-oxobutyl phosphate + 5-amino-6-(D-ribitylamino)uracil = 6,7-dimethyl-8-(1-D-ribityl)lumazine + phosphate + 2 H2O + H(+). It functions in the pathway cofactor biosynthesis; riboflavin biosynthesis; riboflavin from 2-hydroxy-3-oxobutyl phosphate and 5-amino-6-(D-ribitylamino)uracil: step 1/2. Functionally, catalyzes the formation of 6,7-dimethyl-8-ribityllumazine by condensation of 5-amino-6-(D-ribitylamino)uracil with 3,4-dihydroxy-2-butanone 4-phosphate. This is the penultimate step in the biosynthesis of riboflavin. This Lactococcus lactis subsp. cremoris (strain MG1363) protein is 6,7-dimethyl-8-ribityllumazine synthase.